The primary structure comprises 894 residues: MAFSSCFLLVLLQIFSALLLCLAQDQSGFISLDCGSPRETSFREKTTNITYISDANFINTGVGGSIKQGYRTQFQQQTWNLRSFPQGIRNCYTLNLTIGDEYLIRANFLHGGYDDKPSTQFELYLGPNLWSTVTTTNETEASIFEMIHILTTDRLQICLVKTGNATPFISALELRKLMNTTYLTRQGSLQTFIRADVGATVNQGYRYGIDVFDRVWTPYNFGNWSQISTNQSVNINNDYQPPEIAMVTASVPTDPDAAMNISLVGVERTVQFYVFMHFAEIQELKSNDTREFNIMYNNKHIYGPFRPLNFTTSSVFTPTEVVADANGQYIFSLQRTGNSTLPPLLNAMEIYSVNLLPQQETDRKEVDAMMNIKSAYGVNKIDWEGDPCVPLDYKWSGVNCTYVDNETPKIISLDLSTSGLTGEILEFISDLTSLEVLDLSNNSLTGSVPEFLANMETLKLINLSGNELNGSIPATLLDKERRGSITLSIEGNTGLCSSTSCATTKKKKKNTVIAPVAASLVSVFLIGAGIVTFLILKRKKRTKLGLNPNSGTGTTPLHSRSHHGFEPPVIAKNRKLTYIDVVKITNNFERVLGRGGFGVVYYGVLNNEPVAVKMLTESTALGYKQFKAEVELLLRVHHKDLTCLVGYCEEGDKMSLIYEFMANGDLKEHLSGKRGPSILTWEGRLRIAAESAQGLEYLHNGCKPQIVHRDIKTTNILLNEKFQAKLADFGLSRSFPLGTETHVSTIVAGTPGYLDPEYYRTNWLTEKSDVFSFGVVLLELVTNQPVIDMKREKSHIAEWVGLMLSRGDINSIVDPKLQGDFDPNTIWKVVETAMTCLNPSSSRRPTMTQVVMDLKECLNMEMARNMGSRMTDSTNDSSIELSMNFTTELNPGAR.

Residues 1–23 (MAFSSCFLLVLLQIFSALLLCLA) form the signal peptide. Residues 24 to 515 (QDQSGFISLD…KKKKNTVIAP (492 aa)) lie on the Extracellular side of the membrane. N-linked (GlcNAc...) asparagine glycosylation is found at asparagine 48, asparagine 95, asparagine 137, asparagine 179, asparagine 223, asparagine 230, asparagine 260, asparagine 287, asparagine 309, asparagine 338, asparagine 399, asparagine 441, asparagine 462, and asparagine 469. LRR repeat units follow at residues 431-457 (LTSL…NMET) and 459-479 (KLIN…LLDK). The chain crosses the membrane as a helical span at residues 516 to 536 (VAASLVSVFLIGAGIVTFLIL). Residues 537–894 (KRKKRTKLGL…FTTELNPGAR (358 aa)) lie on the Cytoplasmic side of the membrane. Residue threonine 577 is modified to Phosphothreonine. Residues 586-858 (NNFERVLGRG…QVVMDLKECL (273 aa)) form the Protein kinase domain. ATP is bound by residues 592–600 (LGRGGFGVV) and lysine 613. Phosphotyrosine is present on tyrosine 658. Catalysis depends on aspartate 710, which acts as the Proton acceptor. Serine 744 carries the phosphoserine modification. Phosphothreonine occurs at positions 745 and 750. At tyrosine 758 the chain carries Phosphotyrosine.

It belongs to the protein kinase superfamily. Ser/Thr protein kinase family. Homodimerization. Interacts with BAK1 and FLS2; triggers FLS2-BAK1 complex formation upon microbe-associated molecular patterns (MAMPs) treatment. Also binds to CERK1 and EFR. In terms of tissue distribution, expressed in roots, cotyledons, leaves, flowers and siliques.

The protein localises to the cell membrane. In terms of biological role, negatively regulates the abscisic acid (ABA) signaling pathway. Required for full susceptibility to filamentous (hemi)biotrophic oomycetes (e.g. H.arabidopsidis and P.parasitica) and fungal (e.g. E.cruciferarum) pathogens, probably by triggering the repression of ABA-sensitive COLD REGULATED and RESISTANCE TO DESICCATION genes during infection, but independently of immune responses. Involved in BAK1-dependent and BAK1-independent microbe-associated molecular patterns (MAMPs)-triggered immunity (PTI) leading to defense responses, including callose deposition and MAPK cascade activation, toward pathogenic bacteria (e.g. P.syringae). Required for chitin-mediated PTI. The sequence is that of LRR receptor-like serine/threonine-protein kinase IOS1 from Arabidopsis thaliana (Mouse-ear cress).